The primary structure comprises 382 residues: S-adenosylmethionine synthase (382 aa).

His16 is a binding site for ATP. Mg(2+) is bound at residue Asp18. Glu44 contributes to the K(+) binding site. Residues Glu57 and Gln100 each coordinate L-methionine. The tract at residues 100-110 (QSPDIAQGVDN) is flexible loop. ATP is bound by residues 165–167 (DAK), 231–232 (RF), Asp240, 246–247 (RK), and Lys267. Asp240 provides a ligand contact to L-methionine. Lys271 is a binding site for L-methionine.

This sequence belongs to the AdoMet synthase family. As to quaternary structure, homotetramer; dimer of dimers. Mg(2+) serves as cofactor. Requires K(+) as cofactor.

Its subcellular location is the cytoplasm. The enzyme catalyses L-methionine + ATP + H2O = S-adenosyl-L-methionine + phosphate + diphosphate. It participates in amino-acid biosynthesis; S-adenosyl-L-methionine biosynthesis; S-adenosyl-L-methionine from L-methionine: step 1/1. In terms of biological role, catalyzes the formation of S-adenosylmethionine (AdoMet) from methionine and ATP. The overall synthetic reaction is composed of two sequential steps, AdoMet formation and the subsequent tripolyphosphate hydrolysis which occurs prior to release of AdoMet from the enzyme. This chain is S-adenosylmethionine synthase, found in Legionella pneumophila (strain Paris).